Here is a 216-residue protein sequence, read N- to C-terminus: MANILENQLFTAAKTIEQQLDQQLDRLDNLDSDDLKVLREQRLREMKDLNNKKQEWLRNGHGTYTELADEKEFFEMSKKSPNIVCHFYRDSTERCKIVDMHLKILAAKHVEAKFCKVNAEKTPFLTQRLRIKVIPTIALVKDSKTKDFIVGFTDLGNCDDFATEMLEWRIAHSGAIDYKGDLMQPPDVKRKPFINRPQKTIRGGYDSDDSDIDLDD.

Positions 13–59 (AKTIEQQLDQQLDRLDNLDSDDLKVLREQRLREMKDLNNKKQEWLRN) form a coiled coil. One can recognise a Phosducin domain in the interval 29 to 163 (NLDSDDLKVL…DLGNCDDFAT (135 aa)).

This sequence belongs to the phosducin family. As to expression, highly expressed in germline cells of the testis from the spermatogonia stage until the early spermatid stage but is no longer observed in late-stage spermatids in the distal end of the testis.

It catalyses the reaction [thioredoxin]-dithiol + NADP(+) = [thioredoxin]-disulfide + NADPH + H(+). In terms of biological role, has redox activity with thioredoxin. Required for male fertility and maturation of sperm past the canoe stage during spermiogenesis. The chain is Phosducin-like protein 3 from Drosophila melanogaster (Fruit fly).